The sequence spans 260 residues: Indole-3-glycerol phosphate synthase (260 aa).

Belongs to the TrpC family.

The enzyme catalyses 1-(2-carboxyphenylamino)-1-deoxy-D-ribulose 5-phosphate + H(+) = (1S,2R)-1-C-(indol-3-yl)glycerol 3-phosphate + CO2 + H2O. Its pathway is amino-acid biosynthesis; L-tryptophan biosynthesis; L-tryptophan from chorismate: step 4/5. This is Indole-3-glycerol phosphate synthase from Neisseria gonorrhoeae (strain NCCP11945).